Reading from the N-terminus, the 298-residue chain is Tyrosine recombinase XerC (298 aa).

Residues 2-88 enclose the Core-binding (CB) domain; that stretch reads TDLHTDVERY…ALRSFFDWLV (87 aa). Positions 109–288 constitute a Tyr recombinase domain; the sequence is HLPKNIDVDD…DFQHLASVYD (180 aa). Catalysis depends on residues R148, K172, H240, R243, and H266. Residue Y275 is the O-(3'-phospho-DNA)-tyrosine intermediate of the active site.

The protein belongs to the 'phage' integrase family. XerC subfamily. Forms a cyclic heterotetrameric complex composed of two molecules of XerC and two molecules of XerD, in which XerC interacts with XerD via its C-terminal region, XerD interacts with XerC via its C-terminal region and so on.

The protein resides in the cytoplasm. With respect to regulation, ftsK may regulate the catalytic switch between XerC and XerD in the heterotetrameric complex during the two steps of the recombination process. Its function is as follows. Site-specific tyrosine recombinase, which acts by catalyzing the cutting and rejoining of the recombining DNA molecules. Binds cooperatively to specific DNA consensus sequences that are separated from XerD binding sites by a short central region, forming the heterotetrameric XerC-XerD complex that recombines DNA substrates. The complex is essential to convert dimers of the bacterial chromosome into monomers to permit their segregation at cell division. It also contributes to the segregational stability of plasmids. In the complex XerC specifically exchanges the top DNA strands. The chain is Tyrosine recombinase XerC from Escherichia coli (strain 55989 / EAEC).